We begin with the raw amino-acid sequence, 277 residues long: PTS system sorbose-specific EIIC component (277 aa).

5 consecutive transmembrane segments (helical) span residues 1–21 (MAIS…VGMG), 92–112 (IQKG…LTVL), 133–153 (FTAI…RVSI), 177–197 (VITG…YAMI), and 219–239 (YLKL…IVYV). Residues 3–237 (ISTIQIILIF…GAVGLIFAIV (235 aa)) form the PTS EIIC type-4 domain.

The protein localises to the cell membrane. In terms of biological role, the phosphoenolpyruvate-dependent sugar phosphotransferase system (PTS), a major carbohydrate active transport system, catalyzes the phosphorylation of incoming sugar substrates concomitant with their translocation across the cell membrane. The enzyme II SorABCD PTS system is involved in L-sorbose transport. The chain is PTS system sorbose-specific EIIC component from Lacticaseibacillus casei (Lactobacillus casei).